The chain runs to 558 residues: Formate--tetrahydrofolate ligase (558 aa).

Residue 66 to 73 (TPAGEGKT) participates in ATP binding.

Belongs to the formate--tetrahydrofolate ligase family.

It carries out the reaction (6S)-5,6,7,8-tetrahydrofolate + formate + ATP = (6R)-10-formyltetrahydrofolate + ADP + phosphate. It participates in one-carbon metabolism; tetrahydrofolate interconversion. This is Formate--tetrahydrofolate ligase from Neisseria gonorrhoeae (strain ATCC 700825 / FA 1090).